The primary structure comprises 416 residues: Hemagglutinin-esterase (416 aa).

The N-terminal stretch at 1 to 14 (MLSLILFFPSFAFA) is a signal peptide. The segment at 4–121 (LILFFPSFAF…GVDSYMELKT (118 aa)) is esterase domain first part. Over 15-393 (VTPVTPYFGP…ESVDVISSSY (379 aa)) the chain is Virion surface. The Nucleophile role is filled by S37. C41 and C57 form a disulfide bridge. N-linked (GlcNAc...) asparagine; by host glycans are attached at residues N59 and N76. 5 disulfide bridges follow: C88-C136, C108-C156, C192-C273, C200-C246, and C206-C213. The interval 122–263 (SFNIKLNQMA…GTHNASIVGN (142 aa)) is receptor binding. N-linked (GlcNAc...) asparagine; by host glycosylation is found at N257, N278, and N294. The esterase domain second part stretch occupies residues 264 to 379 (FLFYPTKSYC…SCPQYVKLFD (116 aa)). C304 and C309 form a disulfide bridge. N322 carries N-linked (GlcNAc...) asparagine; by host glycosylation. The active-site Charge relay system is the H328. N-linked (GlcNAc...) asparagine; by host glycosylation occurs at N343. An intrachain disulfide couples C346 to C371. A helical membrane pass occupies residues 394 to 414 (FVATWVLLVVVVILIFVIISF). Residues 415–416 (FC) are Intravirion-facing.

The protein belongs to the influenza type C/coronaviruses hemagglutinin-esterase family. As to quaternary structure, homodimer. Post-translationally, N-glycosylated.

The protein localises to the virion membrane. It localises to the host cell membrane. It catalyses the reaction N-acetyl-9-O-acetylneuraminate + H2O = N-acetylneuraminate + acetate + H(+). It carries out the reaction N-acetyl-4-O-acetylneuraminate + H2O = N-acetylneuraminate + acetate + H(+). Functionally, structural protein that makes short spikes at the surface of the virus. Contains receptor binding and receptor-destroying activities. Mediates de-O-acetylation of N-acetyl-9-O-acetylneuraminic acid, which is probably the receptor determinant recognized by the virus on the surface of erythrocytes and susceptible cells. This receptor-destroying activity is important for virus release as it probably helps preventing self-aggregation and ensures the efficient spread of the progeny virus from cell to cell. May serve as a secondary viral attachment protein for initiating infection, the spike protein being the major one. Seems to be a 'luxury' protein that is not absolutely necessary for virus infection in culture. However, its presence in the virus may alter its pathogenicity. May become a target for both the humoral and the cellular branches of the immune system. This chain is Hemagglutinin-esterase (HE), found in Homo sapiens (Human).